The sequence spans 215 residues: Small ribosomal subunit protein uS3 (215 aa).

One can recognise a KH type-2 domain in the interval 39-109; the sequence is IRKFIKKRLE…EVLVDVKEVK (71 aa).

It belongs to the universal ribosomal protein uS3 family. In terms of assembly, part of the 30S ribosomal subunit. Forms a tight complex with proteins S10 and S14.

Binds the lower part of the 30S subunit head. Binds mRNA in the 70S ribosome, positioning it for translation. The chain is Small ribosomal subunit protein uS3 from Methylacidiphilum infernorum (isolate V4) (Methylokorus infernorum (strain V4)).